The following is a 152-amino-acid chain: MKLIASNKKAYFDYEILETLEAGLVLLGSEVKALRQTRVNLKDNFVKIIKGEAFLFGVHISYLDTIHAYYKPNERRERKLLLHKKQLLKWQIEASKERLSIVGLKLYFNQRNRAKIQIALVKGKKLHDKRQNLKEKALNKEILADLKHHFKG.

Belongs to the SmpB family.

It is found in the cytoplasm. In terms of biological role, required for rescue of stalled ribosomes mediated by trans-translation. Binds to transfer-messenger RNA (tmRNA), required for stable association of tmRNA with ribosomes. tmRNA and SmpB together mimic tRNA shape, replacing the anticodon stem-loop with SmpB. tmRNA is encoded by the ssrA gene; the 2 termini fold to resemble tRNA(Ala) and it encodes a 'tag peptide', a short internal open reading frame. During trans-translation Ala-aminoacylated tmRNA acts like a tRNA, entering the A-site of stalled ribosomes, displacing the stalled mRNA. The ribosome then switches to translate the ORF on the tmRNA; the nascent peptide is terminated with the 'tag peptide' encoded by the tmRNA and targeted for degradation. The ribosome is freed to recommence translation, which seems to be the essential function of trans-translation. The chain is SsrA-binding protein from Helicobacter acinonychis (strain Sheeba).